The sequence spans 267 residues: Putative transcription factor Ovo-like 1 (267 aa).

4 consecutive C2H2-type zinc fingers follow at residues 118-140, 146-168, 174-197, and 213-235; these read FTCH…MKCH, HLCT…VRTH, YKCS…KKIH, and YVCE…LKEH.

Its subcellular location is the nucleus. In terms of biological role, putative transcription factor. Involved in hair formation and spermatogenesis. May function in the differentiation and/or maintenance of the urogenital system. In Bos taurus (Bovine), this protein is Putative transcription factor Ovo-like 1 (OVOL1).